The primary structure comprises 127 residues: Fluoride-specific ion channel FluC (127 aa).

Helical transmembrane passes span 4–24 (LLLA…MLSM), 35–55 (IGTL…FAWF), 71–91 (TGFC…VFLL), and 103–123 (VLIN…LFSA). 2 residues coordinate Na(+): G75 and T78.

It belongs to the fluoride channel Fluc/FEX (TC 1.A.43) family.

The protein resides in the cell inner membrane. It catalyses the reaction fluoride(in) = fluoride(out). Na(+) is not transported, but it plays an essential structural role and its presence is essential for fluoride channel function. Its function is as follows. Fluoride-specific ion channel. Important for reducing fluoride concentration in the cell, thus reducing its toxicity. This is Fluoride-specific ion channel FluC from Salmonella agona (strain SL483).